Consider the following 443-residue polypeptide: Oxygen-dependent coproporphyrinogen-III oxidase, mitochondrial (443 aa).

The transit peptide at 1-98 directs the protein to the mitochondrion; it reads MALRLGQLGS…EMVPKSSGAR (98 aa). Positions 90 to 111 are disordered; the sequence is MVPKSSGARSPSPGRLEEDGDE. Position 101 is a phosphoserine (Ser101). Residues 182–191 form an important for dimerization region; it reads VLQDGRVFEK. Coproporphyrinogen III is bound at residue Ser233. Residue His247 is the Proton donor of the active site. 249 to 251 provides a ligand contact to coproporphyrinogen III; it reads NYR. An important for dimerization region spans residues 381 to 417; that stretch reads YVEFNLVYDRGTKFGLFTPGSRIESILMSLPLTARWE. Lys393 carries the N6-acetyllysine; alternate modification. Lys393 carries the post-translational modification N6-succinyllysine; alternate. 400 to 402 is a binding site for coproporphyrinogen III; the sequence is GSR.

Belongs to the aerobic coproporphyrinogen-III oxidase family. As to quaternary structure, homodimer.

The protein localises to the mitochondrion intermembrane space. The catalysed reaction is coproporphyrinogen III + O2 + 2 H(+) = protoporphyrinogen IX + 2 CO2 + 2 H2O. It functions in the pathway porphyrin-containing compound metabolism; protoporphyrin-IX biosynthesis; protoporphyrinogen-IX from coproporphyrinogen-III (O2 route): step 1/1. Functionally, involved in the heme biosynthesis. Catalyzes the aerobic oxidative decarboxylation of propionate groups of rings A and B of coproporphyrinogen-III to yield the vinyl groups in protoporphyrinogen-IX. This is Oxygen-dependent coproporphyrinogen-III oxidase, mitochondrial from Rattus norvegicus (Rat).